A 131-amino-acid chain; its full sequence is uncharacterized protein (131 aa).

This is an uncharacterized protein from Rickettsia conorii (strain ATCC VR-613 / Malish 7).